A 181-amino-acid polypeptide reads, in one-letter code: Inorganic pyrophosphatase 2 (181 aa).

The substrate site is built by Lys-30, Arg-44, and Tyr-56. Mg(2+) contacts are provided by Asp-66, Asp-71, and Asp-103. Tyr-142 provides a ligand contact to substrate.

Belongs to the PPase family. Homohexamer. It depends on Mg(2+) as a cofactor.

The protein localises to the cytoplasm. It catalyses the reaction diphosphate + H2O = 2 phosphate + H(+). Its function is as follows. Catalyzes the hydrolysis of inorganic pyrophosphate (PPi) forming two phosphate ions. The sequence is that of Inorganic pyrophosphatase 2 from Pseudomonas syringae pv. tomato (strain ATCC BAA-871 / DC3000).